A 274-amino-acid polypeptide reads, in one-letter code: 2,3,4,5-tetrahydropyridine-2,6-dicarboxylate N-succinyltransferase (274 aa).

2 residues coordinate substrate: R104 and D141.

It belongs to the transferase hexapeptide repeat family. As to quaternary structure, homotrimer.

Its subcellular location is the cytoplasm. The enzyme catalyses (S)-2,3,4,5-tetrahydrodipicolinate + succinyl-CoA + H2O = (S)-2-succinylamino-6-oxoheptanedioate + CoA. Its pathway is amino-acid biosynthesis; L-lysine biosynthesis via DAP pathway; LL-2,6-diaminopimelate from (S)-tetrahydrodipicolinate (succinylase route): step 1/3. Its activity is regulated as follows. Inhibited by p-(chloromercuri)benzenesulfonic acid and cobalt. The chain is 2,3,4,5-tetrahydropyridine-2,6-dicarboxylate N-succinyltransferase (dapD) from Unknown prokaryotic organism.